The sequence spans 214 residues: MSRTLTLALSKGRILEETLPLLARCGIEPAEDPDASRKLIIGTNREDVRLLVVRASDVPTYVEHGGADLGVAGRDVLLEHGGDGLYDPVDLGIARCRLMVAGPPDGPPPGRRPRVATKFVHLARQHFAAQGRQAEIIKLYGSMELAPLVGMADLIVDLVDTGNTLRANGLAPLEEIMPISSRLVVNKASLKTSPDRLGTLIDDLAAAARAKDTS.

The protein belongs to the ATP phosphoribosyltransferase family. Short subfamily. Heteromultimer composed of HisG and HisZ subunits.

The protein resides in the cytoplasm. The enzyme catalyses 1-(5-phospho-beta-D-ribosyl)-ATP + diphosphate = 5-phospho-alpha-D-ribose 1-diphosphate + ATP. It functions in the pathway amino-acid biosynthesis; L-histidine biosynthesis; L-histidine from 5-phospho-alpha-D-ribose 1-diphosphate: step 1/9. Functionally, catalyzes the condensation of ATP and 5-phosphoribose 1-diphosphate to form N'-(5'-phosphoribosyl)-ATP (PR-ATP). Has a crucial role in the pathway because the rate of histidine biosynthesis seems to be controlled primarily by regulation of HisG enzymatic activity. This is ATP phosphoribosyltransferase from Halorhodospira halophila (strain DSM 244 / SL1) (Ectothiorhodospira halophila (strain DSM 244 / SL1)).